Reading from the N-terminus, the 160-residue chain is Small ribosomal subunit protein uS19 (160 aa).

Residues 1–27 are disordered; the sequence is MARQKFSGKGGKGKSKKGQQSTAPRRR.

The protein belongs to the universal ribosomal protein uS19 family.

Functionally, protein S19 forms a complex with S13 that binds strongly to the 16S ribosomal RNA. The protein is Small ribosomal subunit protein uS19 of Methanococcus vannielii (strain ATCC 35089 / DSM 1224 / JCM 13029 / OCM 148 / SB).